The primary structure comprises 362 residues: NAD(P)H-quinone oxidoreductase subunit 1, chloroplastic (362 aa).

7 helical membrane-spanning segments follow: residues 26–48, 97–119, 126–148, 163–185, 254–276, 296–318, and 338–360; these read LIWILPIFALLLGITIEVLVIVW, FSIGPSIAVISILLSFLVIPLGY, LSIGVFLWIAISSIAPIGLLMAG, AAAQSISYEIPLTFCVLAISLLS, LFYLVSYLNLLVSSLFVTVLYLG, IIGILEMVIGIFITLTKAYLFLF, and LGWKFLLPISLGNLLLTTSFQLV.

Belongs to the complex I subunit 1 family. NDH is composed of at least 16 different subunits, 5 of which are encoded in the nucleus.

The protein resides in the plastid. It localises to the chloroplast thylakoid membrane. The catalysed reaction is a plastoquinone + NADH + (n+1) H(+)(in) = a plastoquinol + NAD(+) + n H(+)(out). It carries out the reaction a plastoquinone + NADPH + (n+1) H(+)(in) = a plastoquinol + NADP(+) + n H(+)(out). Its function is as follows. NDH shuttles electrons from NAD(P)H:plastoquinone, via FMN and iron-sulfur (Fe-S) centers, to quinones in the photosynthetic chain and possibly in a chloroplast respiratory chain. The immediate electron acceptor for the enzyme in this species is believed to be plastoquinone. Couples the redox reaction to proton translocation, and thus conserves the redox energy in a proton gradient. This is NAD(P)H-quinone oxidoreductase subunit 1, chloroplastic (ndhA) from Zea mays (Maize).